A 104-amino-acid chain; its full sequence is Large ribosomal subunit protein bL21 (104 aa).

The protein belongs to the bacterial ribosomal protein bL21 family. As to quaternary structure, part of the 50S ribosomal subunit. Contacts protein L20.

This protein binds to 23S rRNA in the presence of protein L20. In Helicobacter pylori (strain Shi470), this protein is Large ribosomal subunit protein bL21.